Consider the following 163-residue polypeptide: Cyanate hydratase (163 aa).

Catalysis depends on residues R103, E106, and S129.

Belongs to the cyanase family.

The enzyme catalyses cyanate + hydrogencarbonate + 3 H(+) = NH4(+) + 2 CO2. Catalyzes the reaction of cyanate with bicarbonate to produce ammonia and carbon dioxide. This chain is Cyanate hydratase, found in Paracoccidioides lutzii (strain ATCC MYA-826 / Pb01) (Paracoccidioides brasiliensis).